Here is a 427-residue protein sequence, read N- to C-terminus: Acyltransferase fer5 (427 aa).

The disordered stretch occupies residues 1-24; the sequence is MTAATSVQPSPAPRQPGLRATFNP. His342 is a binding site for substrate. The Proton acceptor role is filled by Glu380.

It belongs to the lysine N-acyltransferase mbtK family.

Its pathway is siderophore biosynthesis. Its function is as follows. Acyltransferase; part of the gene cluster that mediates the biosynthesis of siderophore ferrichrome A which is contributing to organismal virulence. The first step of ferrichrome A biosynthesis is performed by the HMG-CoA synthase hcs1 which catalyzes the generation of HMG-CoA and CoA using acetoacetyl-CoA and acetyl-CoA as substrates. The enoyl-CoA isomerase/hydratase fer4 then catalyzes the conversion of hcs1-produced HMG-CoA to methylglutaconyl-CoA. The acyltransferase fer5 then fuses the fer4-generated methylglutaconyl-CoA with sid1-generated hydroxyornithine to yield methylglutaconyl hydroxyornithine. Methylglutaconyl hydroxyornithine is then available for use by the NRPS fer3 to generate ferrichrome A. In Mycosarcoma maydis (Corn smut fungus), this protein is Acyltransferase fer5.